Reading from the N-terminus, the 919-residue chain is Alanine--tRNA ligase (919 aa).

Residues histidine 565, histidine 569, cysteine 667, and histidine 671 each contribute to the Zn(2+) site.

It belongs to the class-II aminoacyl-tRNA synthetase family. Zn(2+) serves as cofactor.

The protein resides in the cytoplasm. It catalyses the reaction tRNA(Ala) + L-alanine + ATP = L-alanyl-tRNA(Ala) + AMP + diphosphate. Catalyzes the attachment of alanine to tRNA(Ala) in a two-step reaction: alanine is first activated by ATP to form Ala-AMP and then transferred to the acceptor end of tRNA(Ala). Also edits incorrectly charged Ser-tRNA(Ala) and Gly-tRNA(Ala) via its editing domain. This Leptospira biflexa serovar Patoc (strain Patoc 1 / Ames) protein is Alanine--tRNA ligase.